A 405-amino-acid chain; its full sequence is Cysteine desulfurase IscS (405 aa).

Pyridoxal 5'-phosphate-binding positions include alanine 75–threonine 76, asparagine 156, glutamine 184, and serine 204–histidine 206. Lysine 207 bears the N6-(pyridoxal phosphate)lysine mark. Pyridoxal 5'-phosphate is bound at residue threonine 244. Catalysis depends on cysteine 329, which acts as the Cysteine persulfide intermediate. Cysteine 329 is a binding site for [2Fe-2S] cluster.

It belongs to the class-V pyridoxal-phosphate-dependent aminotransferase family. NifS/IscS subfamily. Homodimer. Forms a heterotetramer with IscU, interacts with other sulfur acceptors. Requires pyridoxal 5'-phosphate as cofactor.

It is found in the cytoplasm. The catalysed reaction is (sulfur carrier)-H + L-cysteine = (sulfur carrier)-SH + L-alanine. It participates in cofactor biosynthesis; iron-sulfur cluster biosynthesis. Master enzyme that delivers sulfur to a number of partners involved in Fe-S cluster assembly, tRNA modification or cofactor biosynthesis. Catalyzes the removal of elemental sulfur atoms from cysteine to produce alanine. Functions as a sulfur delivery protein for Fe-S cluster synthesis onto IscU, an Fe-S scaffold assembly protein, as well as other S acceptor proteins. This is Cysteine desulfurase IscS from Acinetobacter baumannii (strain AB307-0294).